A 994-amino-acid polypeptide reads, in one-letter code: Protein HIR2 (994 aa).

WD repeat units lie at residues 10–49 (LHSGQIHSIDINKDNSKILTSGLDKEINVWNLQEFVQLTT), 70–110 (AHED…HELI), 118–157 (DGTSRVVDLAWSDDGRMLAWSSGDCKIHIYDTEKATYQEL), 164–203 (EKLTVQRSIAFDPTNHYLISMGDDTSIYLYQYQYEPTTRN), 220–263 (SMNV…NNIL), 276–319 (QYNP…PIFI), and 323–364 (ISKK…NTVS). Disordered regions lie at residues 413-445 (VHEAKAKKPTEGIKDLSSISPEEENADTESPLK) and 482-550 (AMST…TSNL). Residues 414-426 (HEAKAKKPTEGIK) are compositionally biased toward basic and acidic residues. The span at 482–492 (AMSTTRSTKSQ) shows a compositional bias: polar residues. Basic and acidic residues predominate over residues 495–509 (NPKEKPTKVTPEKAK). The segment covering 525-545 (SSMNENSSNNSVKKSNTSESN) has biased composition (low complexity).

The protein belongs to the WD repeat HIR1 family.

Its subcellular location is the nucleus. Required for replication-independent chromatin assembly and for the periodic repression of histone gene transcription during the cell cycle. The sequence is that of Protein HIR2 (HIR2) from Debaryomyces hansenii (strain ATCC 36239 / CBS 767 / BCRC 21394 / JCM 1990 / NBRC 0083 / IGC 2968) (Yeast).